Here is a 300-residue protein sequence, read N- to C-terminus: Ubiquinone biosynthesis protein COQ4, mitochondrial (300 aa).

Residues histidine 173, aspartate 174, histidine 177, and glutamate 189 each contribute to the Zn(2+) site.

The protein belongs to the COQ4 family. As to quaternary structure, component of a multi-subunit COQ enzyme complex, composed of at least COQ3, COQ4, COQ5, COQ6, COQ7 and COQ9. Requires Zn(2+) as cofactor.

The protein resides in the mitochondrion inner membrane. The catalysed reaction is a 4-hydroxy-3-methoxy-5-(all-trans-polyprenyl)benzoate + H(+) = a 2-methoxy-6-(all-trans-polyprenyl)phenol + CO2. The protein operates within cofactor biosynthesis; ubiquinone biosynthesis. Lyase that catalyzes the C1-decarboxylation of 4-hydroxy-3-methoxy-5-(all-trans-polyprenyl)benzoic acid into 2-methoxy-6-(all-trans-polyprenyl)phenol during ubiquinone biosynthesis. This chain is Ubiquinone biosynthesis protein COQ4, mitochondrial, found in Cryptococcus neoformans var. neoformans serotype D (strain JEC21 / ATCC MYA-565) (Filobasidiella neoformans).